Consider the following 493-residue polypeptide: ATP synthase subunit beta, chloroplastic (493 aa).

170–177 contributes to the ATP binding site; that stretch reads GGAGVGKT.

This sequence belongs to the ATPase alpha/beta chains family. F-type ATPases have 2 components, CF(1) - the catalytic core - and CF(0) - the membrane proton channel. CF(1) has five subunits: alpha(3), beta(3), gamma(1), delta(1), epsilon(1). CF(0) has four main subunits: a(1), b(1), b'(1) and c(9-12).

The protein localises to the plastid. It is found in the chloroplast thylakoid membrane. The enzyme catalyses ATP + H2O + 4 H(+)(in) = ADP + phosphate + 5 H(+)(out). In terms of biological role, produces ATP from ADP in the presence of a proton gradient across the membrane. The catalytic sites are hosted primarily by the beta subunits. The protein is ATP synthase subunit beta, chloroplastic of Adiantum capillus-veneris (Maidenhair fern).